Reading from the N-terminus, the 348-residue chain is N-acetyl-gamma-glutamyl-phosphate reductase (348 aa).

Cysteine 151 is a catalytic residue.

The protein belongs to the NAGSA dehydrogenase family. Type 1 subfamily.

It is found in the cytoplasm. It catalyses the reaction N-acetyl-L-glutamate 5-semialdehyde + phosphate + NADP(+) = N-acetyl-L-glutamyl 5-phosphate + NADPH + H(+). It functions in the pathway amino-acid biosynthesis; L-arginine biosynthesis; N(2)-acetyl-L-ornithine from L-glutamate: step 3/4. In terms of biological role, catalyzes the NADPH-dependent reduction of N-acetyl-5-glutamyl phosphate to yield N-acetyl-L-glutamate 5-semialdehyde. The polypeptide is N-acetyl-gamma-glutamyl-phosphate reductase (Lachnospira eligens (strain ATCC 27750 / DSM 3376 / VPI C15-48 / C15-B4) (Eubacterium eligens)).